The sequence spans 70 residues: Large ribosomal subunit protein uL29 (70 aa).

Belongs to the universal ribosomal protein uL29 family.

The protein is Large ribosomal subunit protein uL29 of Prochlorococcus marinus (strain MIT 9303).